The chain runs to 337 residues: Viral cathepsin (337 aa).

A signal peptide spans Met1–Thr16. Residues Arg17–Arg126 constitute a propeptide, activation peptide. 3 disulfide bridges follow: Cys147–Cys188, Cys181–Cys221, and Cys276–Cys324. The active site involves Cys150. Residues His283 and Asn303 contribute to the active site.

This sequence belongs to the peptidase C1 family. Synthesized as an inactive proenzyme and activated by proteolytic removal of the inhibitory propeptide.

The enzyme catalyses Endopeptidase of broad specificity, hydrolyzing substrates of both cathepsin L and cathepsin B.. In terms of biological role, cysteine protease that plays an essential role in host liquefaction to facilitate horizontal transmission of the virus. May participate in the degradation of foreign protein expressed by the baculovirus system. The polypeptide is Viral cathepsin (VCATH) (Lepidoptera (butterflies and moths)).